Consider the following 327-residue polypeptide: Phenylalanine--tRNA ligase alpha subunit (327 aa).

Glutamate 252 is a binding site for Mg(2+).

Belongs to the class-II aminoacyl-tRNA synthetase family. Phe-tRNA synthetase alpha subunit type 1 subfamily. In terms of assembly, tetramer of two alpha and two beta subunits. Mg(2+) is required as a cofactor.

The protein localises to the cytoplasm. It carries out the reaction tRNA(Phe) + L-phenylalanine + ATP = L-phenylalanyl-tRNA(Phe) + AMP + diphosphate + H(+). This chain is Phenylalanine--tRNA ligase alpha subunit, found in Klebsiella pneumoniae (strain 342).